A 392-amino-acid chain; its full sequence is NAD(P)H-quinone oxidoreductase subunit H, chloroplastic (392 aa).

The protein belongs to the complex I 49 kDa subunit family. In terms of assembly, NDH is composed of at least 16 different subunits, 5 of which are encoded in the nucleus.

It localises to the plastid. Its subcellular location is the chloroplast thylakoid membrane. It carries out the reaction a plastoquinone + NADH + (n+1) H(+)(in) = a plastoquinol + NAD(+) + n H(+)(out). It catalyses the reaction a plastoquinone + NADPH + (n+1) H(+)(in) = a plastoquinol + NADP(+) + n H(+)(out). In terms of biological role, NDH shuttles electrons from NAD(P)H:plastoquinone, via FMN and iron-sulfur (Fe-S) centers, to quinones in the photosynthetic chain and possibly in a chloroplast respiratory chain. The immediate electron acceptor for the enzyme in this species is believed to be plastoquinone. Couples the redox reaction to proton translocation, and thus conserves the redox energy in a proton gradient. This is NAD(P)H-quinone oxidoreductase subunit H, chloroplastic from Marchantia polymorpha (Common liverwort).